Consider the following 211-residue polypeptide: Guanylate kinase (211 aa).

Residues 5 to 184 (GLLIVFSGPS…AAERVKRIIE (180 aa)) form the Guanylate kinase-like domain. Residue 12–19 (GPSGVGKG) participates in ATP binding.

This sequence belongs to the guanylate kinase family.

Its subcellular location is the cytoplasm. The catalysed reaction is GMP + ATP = GDP + ADP. In terms of biological role, essential for recycling GMP and indirectly, cGMP. This is Guanylate kinase from Streptococcus pyogenes serotype M3 (strain SSI-1).